The following is a 122-amino-acid chain: LOB domain-containing protein 5 (122 aa).

The LOB domain occupies 8 to 109 (RPCSVCITKN…AYLRELQEKI (102 aa)).

Belongs to the LOB domain-containing protein family.

In Arabidopsis thaliana (Mouse-ear cress), this protein is LOB domain-containing protein 5 (LBD5).